The sequence spans 205 residues: Urease accessory protein UreG 1 (205 aa).

14–21 lines the GTP pocket; that stretch reads GPVGSGKT.

It belongs to the SIMIBI class G3E GTPase family. UreG subfamily. Homodimer. UreD, UreF and UreG form a complex that acts as a GTP-hydrolysis-dependent molecular chaperone, activating the urease apoprotein by helping to assemble the nickel containing metallocenter of UreC. The UreE protein probably delivers the nickel.

Its subcellular location is the cytoplasm. Its function is as follows. Facilitates the functional incorporation of the urease nickel metallocenter. This process requires GTP hydrolysis, probably effectuated by UreG. The chain is Urease accessory protein UreG 1 from Methylobacterium radiotolerans (strain ATCC 27329 / DSM 1819 / JCM 2831 / NBRC 15690 / NCIMB 10815 / 0-1).